Reading from the N-terminus, the 235-residue chain is SMN complex subunit yip11/gem2 (235 aa).

Residues 1–34 are disordered; it reads MPSKRKRNPLQYQTSGSLDEETNQRSAFPQIDNN. Positions 24–34 are enriched in polar residues; it reads QRSAFPQIDNN. Phosphoserine is present on residues S117 and S118.

The protein belongs to the gemin-2 family. Part of the core SMN complex at least composed of smn1, yip11/gem2, gem6, gem7 and gem8. Interacts with smn1; the interaction is direct.

It localises to the nucleus. The SMN complex catalyzes the assembly of small nuclear ribonucleoproteins (snRNPs), the building blocks of the spliceosome, and thereby plays an important role in the splicing of cellular pre-mRNAs. Most spliceosomal snRNPs contain a common set of Sm proteins smb1, smd1, smd2, smd3, sme1, smf1 and smg1 that assemble in a heptameric protein ring on the Sm site of the small nuclear RNA to form the core snRNP. In the cytosol, the Sm proteins smd1, smd2, sme1, smf1 and smg1 (5Sm) are trapped in an inactive 6S pICln-Sm complex by the chaperone saf5. To complete assembly of core snRNPs, the SMN complex accepts 5Sm from saf5. Binding of snRNA inside 5Sm ultimately triggers eviction of the SMN complex, thereby allowing binding of smd3 and smb1 to complete assembly of the core snRNP. Within the SMN complex, yip11/gem2 constrains the conformation of 5Sm, thereby promoting 5Sm binding to snRNA containing the snRNP code (a nonameric Sm site and a 3'-adjacent stem-loop), thus preventing progression of assembly until a cognate substrate is bound. The polypeptide is SMN complex subunit yip11/gem2 (yip11) (Schizosaccharomyces pombe (strain 972 / ATCC 24843) (Fission yeast)).